The primary structure comprises 494 residues: Protein DETOXIFICATION 22 (494 aa).

The next 12 membrane-spanning stretches (helical) occupy residues 40–60, 78–98, 123–143, 159–179, 188–208, 217–237, 268–288, 299–319, 340–360, 384–404, 416–436, and 441–461; these read LWVV…VSLV, ITFT…ASAL, IVLT…GPIL, IALW…CQIF, IIAY…WLLV, GAMT…LLYV, GGMV…TGNL, AICI…LAAV, IVAV…FLFL, LLAF…VAVG, LACY…VVGL, and VWIG…IMTL.

It belongs to the multi antimicrobial extrusion (MATE) (TC 2.A.66.1) family.

It is found in the membrane. This chain is Protein DETOXIFICATION 22, found in Arabidopsis thaliana (Mouse-ear cress).